The following is a 176-amino-acid chain: Large ribosomal subunit protein eL20 (176 aa).

A Glycyl lysine isopeptide (Lys-Gly) (interchain with G-Cter in SUMO2) cross-link involves residue Lys-11. Tyr-63 is modified (phosphotyrosine). Ser-71 bears the Phosphoserine mark. The residue at position 76 (Lys-76) is an N6-succinyllysine. Ser-123 is subject to Phosphoserine. Residues Lys-128 and Lys-170 each participate in a glycyl lysine isopeptide (Lys-Gly) (interchain with G-Cter in SUMO2) cross-link.

The protein belongs to the eukaryotic ribosomal protein eL20 family. Component of the large ribosomal subunit. Binds IPO9 with high affinity.

It is found in the cytoplasm. Component of the large ribosomal subunit. The ribosome is a large ribonucleoprotein complex responsible for the synthesis of proteins in the cell. This chain is Large ribosomal subunit protein eL20 (Rpl18a), found in Mus musculus (Mouse).